The chain runs to 209 residues: Guanylate kinase (209 aa).

A Guanylate kinase-like domain is found at 9 to 188 (GIMLVISSPS…SVYQIKCIFT (180 aa)). 16–23 (SPSGGGKT) contributes to the ATP binding site.

The protein belongs to the guanylate kinase family.

It is found in the cytoplasm. The enzyme catalyses GMP + ATP = GDP + ADP. In terms of biological role, essential for recycling GMP and indirectly, cGMP. The chain is Guanylate kinase from Ehrlichia chaffeensis (strain ATCC CRL-10679 / Arkansas).